The primary structure comprises 457 residues: Argininosuccinate lyase (457 aa).

The protein belongs to the lyase 1 family. Argininosuccinate lyase subfamily.

It localises to the cytoplasm. The enzyme catalyses 2-(N(omega)-L-arginino)succinate = fumarate + L-arginine. The protein operates within amino-acid biosynthesis; L-arginine biosynthesis; L-arginine from L-ornithine and carbamoyl phosphate: step 3/3. In Haemophilus influenzae (strain PittEE), this protein is Argininosuccinate lyase.